Reading from the N-terminus, the 143-residue chain is Large ribosomal subunit protein uL13 (143 aa).

Belongs to the universal ribosomal protein uL13 family. As to quaternary structure, part of the 50S ribosomal subunit.

In terms of biological role, this protein is one of the early assembly proteins of the 50S ribosomal subunit, although it is not seen to bind rRNA by itself. It is important during the early stages of 50S assembly. In Desulfitobacterium hafniense (strain DSM 10664 / DCB-2), this protein is Large ribosomal subunit protein uL13.